The primary structure comprises 291 residues: Fructose-1,6-bisphosphatase class 1 1 (291 aa).

Mg(2+) contacts are provided by Glu-78, Asp-95, Leu-97, and Asp-98. Residues 98-101 (DGSS), Tyr-203, and Lys-233 each bind substrate. Glu-239 serves as a coordination point for Mg(2+).

Belongs to the FBPase class 1 family. As to quaternary structure, homotetramer. Mg(2+) is required as a cofactor.

Its subcellular location is the cytoplasm. The catalysed reaction is beta-D-fructose 1,6-bisphosphate + H2O = beta-D-fructose 6-phosphate + phosphate. Its pathway is carbohydrate biosynthesis; gluconeogenesis. This Haloarcula marismortui (strain ATCC 43049 / DSM 3752 / JCM 8966 / VKM B-1809) (Halobacterium marismortui) protein is Fructose-1,6-bisphosphatase class 1 1.